Reading from the N-terminus, the 213-residue chain is MHQQKRQPELVEGNLPVFVFPTELIFYADDQSTHKQVLTLYNPYEFALKFKVLCTTPNKYVVVDAAGAVKPQCCVDIVIRHRDVRSCHYGVIDKFRLQVSEQSQRKALGRKEVVATLLPSAKEQQKEEEEKRLKEHLTESLFFEQSFQPENRAVSSGPSLLTVFLGVVCIAALMLPTLGDVESLVPLYLHLSVNQKLVAAYILGLITMAILRT.

Positions 16 to 143 constitute an MSP domain; the sequence is PVFVFPTELI…KEHLTESLFF (128 aa). The next 2 membrane-spanning stretches (helical) occupy residues 159-179 and 191-211; these read SLLTVFLGVVCIAALMLPTLG and LSVNQKLVAAYILGLITMAIL. The Nuclear export signal signature appears at 205–208; the sequence is LITM.

It localises to the endoplasmic reticulum membrane. It is found in the golgi apparatus membrane. In terms of biological role, plays a role in differentiation and/or proliferation of mesenchymal stem cells. Proposed to be involved in epithelial-to-mesenchymal transition (EMT). However, another study suggests that it is not required for EMT or stem cell self-renewal and acts during later stages of differentiation. The chain is Motile sperm domain-containing protein 1 (MOSPD1) from Homo sapiens (Human).